The chain runs to 103 residues: ATP-dependent Clp protease adapter protein ClpS 2 (103 aa).

It belongs to the ClpS family. Binds to the N-terminal domain of the chaperone ClpA.

In terms of biological role, involved in the modulation of the specificity of the ClpAP-mediated ATP-dependent protein degradation. This is ATP-dependent Clp protease adapter protein ClpS 2 from Agrobacterium fabrum (strain C58 / ATCC 33970) (Agrobacterium tumefaciens (strain C58)).